A 148-amino-acid chain; its full sequence is Ubiquitin-conjugating enzyme E2 4 (148 aa).

Positions 1–22 (MSSSKRIAKELSDLERDPPTSC) are disordered. Positions 2–148 (SSSKRIAKEL…AREWTKKYAV (147 aa)) constitute a UBC core domain. Basic and acidic residues predominate over residues 7-18 (IAKELSDLERDP). At Ser-12 the chain carries Phosphoserine. Residue Cys-86 is the Glycyl thioester intermediate of the active site. Lys-91 participates in a covalent cross-link: Glycyl lysine isopeptide (Lys-Gly) (interchain with G-Cter in ubiquitin).

It belongs to the ubiquitin-conjugating enzyme family. Interacts with TUL1. The N-terminus is blocked.

It catalyses the reaction S-ubiquitinyl-[E1 ubiquitin-activating enzyme]-L-cysteine + [E2 ubiquitin-conjugating enzyme]-L-cysteine = [E1 ubiquitin-activating enzyme]-L-cysteine + S-ubiquitinyl-[E2 ubiquitin-conjugating enzyme]-L-cysteine.. It functions in the pathway protein modification; protein ubiquitination. Its function is as follows. E2 ubiquitin-conjugating enzyme that catalyzes the covalent attachment of ubiquitin to other proteins. Mediates the selective degradation of short-lived and abnormal proteins. Mediates ubiquitination of PEX5. This Saccharomyces cerevisiae (strain ATCC 204508 / S288c) (Baker's yeast) protein is Ubiquitin-conjugating enzyme E2 4.